The chain runs to 225 residues: NAD(P)H-quinone oxidoreductase subunit K, chloroplastic (225 aa).

Positions 43, 44, 108, and 139 each coordinate [4Fe-4S] cluster.

This sequence belongs to the complex I 20 kDa subunit family. NDH is composed of at least 16 different subunits, 5 of which are encoded in the nucleus. Requires [4Fe-4S] cluster as cofactor.

It is found in the plastid. The protein resides in the chloroplast thylakoid membrane. The catalysed reaction is a plastoquinone + NADH + (n+1) H(+)(in) = a plastoquinol + NAD(+) + n H(+)(out). It catalyses the reaction a plastoquinone + NADPH + (n+1) H(+)(in) = a plastoquinol + NADP(+) + n H(+)(out). In terms of biological role, NDH shuttles electrons from NAD(P)H:plastoquinone, via FMN and iron-sulfur (Fe-S) centers, to quinones in the photosynthetic chain and possibly in a chloroplast respiratory chain. The immediate electron acceptor for the enzyme in this species is believed to be plastoquinone. Couples the redox reaction to proton translocation, and thus conserves the redox energy in a proton gradient. This Illicium oligandrum (Star anise) protein is NAD(P)H-quinone oxidoreductase subunit K, chloroplastic.